The chain runs to 518 residues: Sensor protein kinase HptS (518 aa).

A run of 2 helical transmembrane segments spans residues 20-40 and 222-242; these read IFPV…IYIW and GITL…FGFI. In terms of domain architecture, Histidine kinase spans 297-513; the sequence is EQLIHSIEHT…LICYKIPLSR (217 aa). His325 bears the Phosphohistidine; by autocatalysis mark.

Autophosphorylated.

Its subcellular location is the cell membrane. The catalysed reaction is ATP + protein L-histidine = ADP + protein N-phospho-L-histidine.. Its function is as follows. Member of the two-component regulatory system HptS/HptR that regulates genes involved in hexose phosphate transport system in response to changes in extracellular phosphate sources. May act as a sensor protein kinase which is autophosphorylated at a histidine residue and transfers its phosphate group to the conserved aspartic acid residue in the regulatory domain of HptS. In turn, HptS antagonizes CcpA-dependent transcription of a subset of CcpA-regulated genes involved in antibiotic susceptibility. The polypeptide is Sensor protein kinase HptS (hptS) (Staphylococcus aureus (strain MRSA252)).